The chain runs to 64 residues: DNA gyrase inhibitor YacG (64 aa).

Zn(2+) is bound by residues Cys9, Cys12, Cys28, and Cys32. Residues 42-64 form a disordered region; sequence DEENAIPGAPDMSDSDGWSEEQY. The span at 54-64 shows a compositional bias: acidic residues; it reads SDSDGWSEEQY.

This sequence belongs to the DNA gyrase inhibitor YacG family. In terms of assembly, interacts with GyrB. Requires Zn(2+) as cofactor.

In terms of biological role, inhibits all the catalytic activities of DNA gyrase by preventing its interaction with DNA. Acts by binding directly to the C-terminal domain of GyrB, which probably disrupts DNA binding by the gyrase. This Vibrio vulnificus (strain YJ016) protein is DNA gyrase inhibitor YacG.